The primary structure comprises 332 residues: Palmitoyltransferase ZDHHC15B (332 aa).

Residues 1 to 14 (MALSRALRCCQRIF) lie on the Cytoplasmic side of the membrane. Residues 15 to 35 (SWIPVIIISSVVLWSYYAYVF) traverse the membrane as a helical segment. The Lumenal segment spans residues 36–50 (ELCFVTLSNNLERVT). The helical transmembrane segment at 51 to 71 (YLLIFHVCFIMFCWTYWKAIF) threads the bilayer. Topologically, residues 72–166 (TPPSTPTKKF…NNCVGFSNYK (95 aa)) are cytoplasmic. The DHHC domain occupies 123-173 (RFCDRCQVIKPDRCHHCSVCETCVLKMDHHCPWVNNCVGFSNYKFFLLFLS). Residues C125 and C128 each contribute to the Zn(2+) site. K132 is a binding site for substrate. Positions 138, 139, 142, 145, and 152 each coordinate Zn(2+). The active-site S-palmitoyl cysteine intermediate is the C153. C159 contacts Zn(2+). The helical transmembrane segment at 167–187 (FFLLFLSYSMIYCVFIASTVF) threads the bilayer. Residues 188 to 204 (QYFLKFWVGDLPNGPAK) lie on the Lumenal side of the membrane. Residues 205 to 228 (FHVLFLLFVALMFFVSLMFLFGYH) form a helical membrane-spanning segment. Over 229–332 (CWLVAKNRST…GSSLLIRTES (104 aa)) the chain is Cytoplasmic. The segment at 305–332 (EEKWVEDGGSDEESADENGSSLLIRTES) is disordered.

This sequence belongs to the DHHC palmitoyltransferase family. In terms of processing, autopalmitoylated (in vitro).

It is found in the golgi apparatus membrane. It localises to the postsynaptic density. The catalysed reaction is L-cysteinyl-[protein] + hexadecanoyl-CoA = S-hexadecanoyl-L-cysteinyl-[protein] + CoA. It catalyses the reaction L-cysteinyl-[protein] + tetradecanoyl-CoA = S-tetradecanoyl-L-cysteinyl-[protein] + CoA. It carries out the reaction L-cysteinyl-[protein] + octadecanoyl-CoA = S-octadecanoyl-L-cysteinyl-[protein] + CoA. Functionally, palmitoyltransferase that catalyzes the addition of palmitate onto various protein substrates. Has no stringent fatty acid selectivity and in addition to palmitate can also transfer onto target proteins myristate from tetradecanoyl-CoA and stearate from octadecanoyl-CoA. May thereby regulate target proteins association and localization to membranes. In the nervous system, probably catalyzes the palmitoylation of synaptic proteins and is involved in the differentiation of dopaminergic neurons and the development of the diencephalon. This is Palmitoyltransferase ZDHHC15B (zdhhc15b) from Danio rerio (Zebrafish).